The following is a 170-amino-acid chain: NADH-quinone oxidoreductase subunit B (170 aa).

C37, C38, C102, and C131 together coordinate [4Fe-4S] cluster.

This sequence belongs to the complex I 20 kDa subunit family. NDH-1 is composed of 14 different subunits. Subunits NuoB, C, D, E, F, and G constitute the peripheral sector of the complex. [4Fe-4S] cluster is required as a cofactor.

The protein resides in the cell inner membrane. The catalysed reaction is a quinone + NADH + 5 H(+)(in) = a quinol + NAD(+) + 4 H(+)(out). NDH-1 shuttles electrons from NADH, via FMN and iron-sulfur (Fe-S) centers, to quinones in the respiratory chain. The immediate electron acceptor for the enzyme in this species is believed to be ubiquinone. Couples the redox reaction to proton translocation (for every two electrons transferred, four hydrogen ions are translocated across the cytoplasmic membrane), and thus conserves the redox energy in a proton gradient. The protein is NADH-quinone oxidoreductase subunit B of Geobacter sulfurreducens (strain ATCC 51573 / DSM 12127 / PCA).